The sequence spans 135 residues: NADPH-dependent 7-cyano-7-deazaguanine reductase (135 aa).

Catalysis depends on Cys48, which acts as the Thioimide intermediate. The active-site Proton donor is the Asp55. Residues 70-72 (IEL) and 89-90 (HE) contribute to the substrate site.

It belongs to the GTP cyclohydrolase I family. QueF type 1 subfamily.

The protein localises to the cytoplasm. It catalyses the reaction 7-aminomethyl-7-carbaguanine + 2 NADP(+) = 7-cyano-7-deazaguanine + 2 NADPH + 3 H(+). Its pathway is tRNA modification; tRNA-queuosine biosynthesis. Catalyzes the NADPH-dependent reduction of 7-cyano-7-deazaguanine (preQ0) to 7-aminomethyl-7-deazaguanine (preQ1). The protein is NADPH-dependent 7-cyano-7-deazaguanine reductase of Prochlorococcus marinus (strain MIT 9303).